Here is a 308-residue protein sequence, read N- to C-terminus: Oxygen-dependent coproporphyrinogen-III oxidase (308 aa).

Ser92 contacts substrate. 2 residues coordinate a divalent metal cation: His96 and His106. His106 serves as the catalytic Proton donor. A substrate-binding site is contributed by 108-110; it reads NVR. His145 and His175 together coordinate a divalent metal cation. The interval 240-275 is important for dimerization; that stretch reads YVEFNLVWDRGTLFGLQTGGRTESILMSMPPLVRWE. Substrate is bound at residue 258–260; the sequence is GGR.

Belongs to the aerobic coproporphyrinogen-III oxidase family. In terms of assembly, homodimer. A divalent metal cation serves as cofactor.

The protein localises to the cytoplasm. The enzyme catalyses coproporphyrinogen III + O2 + 2 H(+) = protoporphyrinogen IX + 2 CO2 + 2 H2O. Its pathway is porphyrin-containing compound metabolism; protoporphyrin-IX biosynthesis; protoporphyrinogen-IX from coproporphyrinogen-III (O2 route): step 1/1. In terms of biological role, involved in the heme biosynthesis. Catalyzes the aerobic oxidative decarboxylation of propionate groups of rings A and B of coproporphyrinogen-III to yield the vinyl groups in protoporphyrinogen-IX. The sequence is that of Oxygen-dependent coproporphyrinogen-III oxidase from Salmonella paratyphi A (strain ATCC 9150 / SARB42).